The primary structure comprises 149 residues: Calmodulin-B (149 aa).

The residue at position 2 (alanine 2) is an N-acetylalanine. 4 consecutive EF-hand domains span residues 8–43 (EQIAEFKEAFSLFDKDGDGTITTKELGTVMRSLGQN), 44–79 (PTEAELQDMINEVDADGNGTIDFPEFLTMMARKMKE), 81–116 (DSEEEIREAFRVFDKDGNGFISAAELRHVMTNLGEK), and 117–149 (LTDEEVDEMIREADIDGDGQVNYEEFVTMMTCK). Residues aspartate 21, aspartate 23, aspartate 25, threonine 27, glutamate 32, aspartate 57, aspartate 59, asparagine 61, threonine 63, glutamate 68, aspartate 94, aspartate 96, asparagine 98, and glutamate 105 each contribute to the Ca(2+) site. Lysine 116 is modified (N6,N6,N6-trimethyllysine). Residues aspartate 130, aspartate 132, aspartate 134, glutamine 136, and glutamate 141 each coordinate Ca(2+).

Belongs to the calmodulin family.

In terms of biological role, calmodulin mediates the control of a large number of enzymes, ion channels and other proteins by Ca(2+). Among the enzymes to be stimulated by the calmodulin-Ca(2+) complex are a number of protein kinases and phosphatases. This Halocynthia roretzi (Sea squirt) protein is Calmodulin-B.